The chain runs to 222 residues: 3-demethoxyubiquinol 3-hydroxylase (222 aa).

Glutamate 71, glutamate 101, histidine 104, glutamate 153, glutamate 185, and histidine 188 together coordinate Fe cation.

This sequence belongs to the COQ7 family. Fe cation is required as a cofactor.

It is found in the cell membrane. It carries out the reaction a 5-methoxy-2-methyl-3-(all-trans-polyprenyl)benzene-1,4-diol + AH2 + O2 = a 3-demethylubiquinol + A + H2O. It functions in the pathway cofactor biosynthesis; ubiquinone biosynthesis. In terms of biological role, catalyzes the hydroxylation of 2-nonaprenyl-3-methyl-6-methoxy-1,4-benzoquinol during ubiquinone biosynthesis. The chain is 3-demethoxyubiquinol 3-hydroxylase from Bordetella pertussis (strain Tohama I / ATCC BAA-589 / NCTC 13251).